Consider the following 285-residue polypeptide: Acetylglutamate kinase (285 aa).

Residues 63-64 (GG), Arg-85, and Asn-178 contribute to the substrate site.

The protein belongs to the acetylglutamate kinase family. ArgB subfamily.

Its subcellular location is the cytoplasm. It carries out the reaction N-acetyl-L-glutamate + ATP = N-acetyl-L-glutamyl 5-phosphate + ADP. The protein operates within amino-acid biosynthesis; L-arginine biosynthesis; N(2)-acetyl-L-ornithine from L-glutamate: step 2/4. Catalyzes the ATP-dependent phosphorylation of N-acetyl-L-glutamate. This is Acetylglutamate kinase from Synechococcus sp. (strain CC9311).